The primary structure comprises 300 residues: Protein phosphatase 2C 1 (300 aa).

The 276-residue stretch at 23-298 folds into the PPM-type phosphatase domain; it reads IFAASEMQGW…DNMTTILVYL (276 aa). D57, G58, D237, and D289 together coordinate Mn(2+).

It belongs to the PP2C family. The cofactor is Mg(2+). Requires Mn(2+) as cofactor. In terms of processing, the N-terminus is blocked.

It localises to the membrane. The catalysed reaction is O-phospho-L-seryl-[protein] + H2O = L-seryl-[protein] + phosphate. It carries out the reaction O-phospho-L-threonyl-[protein] + H2O = L-threonyl-[protein] + phosphate. Its function is as follows. Serine and threonine phosphatase. The protein is Protein phosphatase 2C 1 of Paramecium tetraurelia.